Here is a 425-residue protein sequence, read N- to C-terminus: MAPERRSRLSETAGLFVSLLALTSIVPVQAVATVPQTDYAKRAERVLRSAPLIDGHNDLPYAIRKSTRDQIYDGKLPFETSLKGHTDLPRMRKGRMGGQFWSVFIACPSDPNAPIDLPTFATRDTLEQIDVARRLVDKYSKDLMFCDNPGCAKRAFRQGKIGSFLGIEGGHQVGSSIAALRQAFYAGARYMTITHNCDNAWATAASTVRAGKPDLGMTDFGPALIKEMNRLGMLVDLSHVSHQSMRDILKVTKAPVIFSHSSAYEVSKHLRNVPDDVLKTVAKNNGVVMVTFVRTFVNVDDPDSVDVNTIVKHIFHIAKVAGWDHVGLGGDYDGTTELPKGLEDVSKYPYLIEKVLEAGATEEQARKLVGENVLRVWTEVEQIAKKIQRSGALPVEEVWKGRNGTALSERSTFIEGPAPLAYGCD.

The first 31 residues, 1–31 (MAPERRSRLSETAGLFVSLLALTSIVPVQAV), serve as a signal peptide directing secretion. Zn(2+) is bound by residues H56, D58, and E168. A disulfide bridge links C107 with C197. Residue H195 coordinates substrate. Zn(2+)-binding residues include H239 and H260. 2 residues coordinate substrate: R271 and D331. N-linked (GlcNAc...) asparagine glycosylation occurs at N403.

The protein belongs to the metallo-dependent hydrolases superfamily. Peptidase M19 family. Zn(2+) serves as cofactor.

The catalysed reaction is an L-aminoacyl-L-amino acid + H2O = 2 an L-alpha-amino acid. Its function is as follows. Hydrolyzes a wide range of dipeptides. The polypeptide is Putative dipeptidase MGYG_00085 (Arthroderma gypseum (strain ATCC MYA-4604 / CBS 118893) (Microsporum gypseum)).